The chain runs to 134 residues: Profilin-4 (134 aa).

Cys13 and Cys118 form a disulfide bridge. The short motif at 84–100 (AVIRGKKGSGGITIKKT) is the Involved in PIP2 interaction element. Thr114 is modified (phosphothreonine).

Belongs to the profilin family. In terms of assembly, occurs in many kinds of cells as a complex with monomeric actin in a 1:1 ratio. In terms of processing, phosphorylated by MAP kinases.

It is found in the cytoplasm. Its subcellular location is the cytoskeleton. Its function is as follows. Binds to actin and affects the structure of the cytoskeleton. At high concentrations, profilin prevents the polymerization of actin, whereas it enhances it at low concentrations. This chain is Profilin-4, found in Olea europaea (Common olive).